Reading from the N-terminus, the 308-residue chain is Ribonuclease Z (308 aa).

7 residues coordinate Zn(2+): His-63, His-65, Asp-67, His-68, His-140, Asp-211, and His-269. Residue Asp-67 is the Proton acceptor of the active site.

Belongs to the RNase Z family. In terms of assembly, homodimer. Requires Zn(2+) as cofactor.

The catalysed reaction is Endonucleolytic cleavage of RNA, removing extra 3' nucleotides from tRNA precursor, generating 3' termini of tRNAs. A 3'-hydroxy group is left at the tRNA terminus and a 5'-phosphoryl group is left at the trailer molecule.. Functionally, zinc phosphodiesterase, which displays some tRNA 3'-processing endonuclease activity. Probably involved in tRNA maturation, by removing a 3'-trailer from precursor tRNA. The protein is Ribonuclease Z of Bacillus velezensis (strain DSM 23117 / BGSC 10A6 / LMG 26770 / FZB42) (Bacillus amyloliquefaciens subsp. plantarum).